Reading from the N-terminus, the 296-residue chain is Acetylglutamate kinase (296 aa).

Substrate-binding positions include 69–70 (GG), Arg91, and Asn192.

Belongs to the acetylglutamate kinase family. ArgB subfamily.

Its subcellular location is the cytoplasm. The catalysed reaction is N-acetyl-L-glutamate + ATP = N-acetyl-L-glutamyl 5-phosphate + ADP. It functions in the pathway amino-acid biosynthesis; L-arginine biosynthesis; N(2)-acetyl-L-ornithine from L-glutamate: step 2/4. Catalyzes the ATP-dependent phosphorylation of N-acetyl-L-glutamate. The sequence is that of Acetylglutamate kinase from Ruthia magnifica subsp. Calyptogena magnifica.